The primary structure comprises 213 residues: Probable elongation factor 1-beta/1-delta 1 (213 aa).

This sequence belongs to the EF-1-beta/EF-1-delta family. As to quaternary structure, EF-1 is composed of 4 subunits: alpha, beta, delta, and gamma.

Functionally, EF-1-beta and EF-1-delta stimulate the exchange of GDP bound to EF-1-alpha to GTP. The sequence is that of Probable elongation factor 1-beta/1-delta 1 (eef-1B.1) from Caenorhabditis elegans.